Here is a 194-residue protein sequence, read N- to C-terminus: Calcium channel flower (194 aa).

The next 3 membrane-spanning stretches (helical) occupy residues 35–55, 66–88, and 107–127; these read LGIV…FSII, IIQM…VCFE, and GLYI…ASLF.

The protein belongs to the calcium channel flower family. In terms of assembly, homomultimer. Associates with the dally/ magu complex.

Its subcellular location is the cell membrane. It is found in the cytoplasmic vesicle. It localises to the secretory vesicle. The protein resides in the synaptic vesicle membrane. The protein localises to the presynaptic cell membrane. Its subcellular location is the endosome. With respect to regulation, channel activity is inhibited by La(3+), which reduces Ca(2+) influx and thus inhibits it's function in promoting activity-dependent bulk endocytosis (ADBE) in response to high stimuli. In terms of biological role, transmembrane protein which mediates synaptic endocytosis, fitness-based cell culling, neuronal culling, morphogen gradient scaling, and calcium transport. Regulates synaptic endocytosis and hence couples exo- with endocytosis. Controls two major modes of synaptic vesicle (SV) endocytosis in the synaptic boutons of neuromuscular junctions (NMJs); Ca(2+) channel-independent Clathrin-mediated endocytosis (CME) in response to mild stimulation, and Ca(2+) channel-dependent activity-dependent bulk endocytosis (ADBE) in response to strong stimulation. Functions in ADBE and subsequent SV reformation from bulk endosomes by initiating Ca(2+) channel-dependent phosphatidylinositol 4,5-bisphosphate (PtdIns(4,5)P2) compartmentalization in synaptic boutons. There it acts at the periactive zone to provide the low Ca(2+) levels required to initiate Calcineurin activation and upregulate PtdIns(4,5)P2. Conversely PtdIns(4,5)P2 enhances fwe Ca(2+) channel-activity, establishing a positive feedback loop that induces PtdIns(4,5)P2 microdomain at the periactive zone. These microdomains trigger bulk membrane invagination (i.e. ADBE) by triggering actin polymerization while also promoting localization of fwe to bulk endosomes, thereby removing the ADBE trigger to reduce endocytosis and prevent excess membrane uptake. PtdIns(4,5)P2 then promotes SV reformation from the bulk endosomes, to coordinate ADBE and subsequent SV reformation. Different combinations of the flower isoforms at the cell membrane are also required for the identification and elimination of suboptimal or supernumerary cells during development, regeneration, and adulthood. Required for the recognition and elimination of unfit cells in the developing wing during cell competition. In the developing pupal retina, mediates the elimination of unwanted postmitotic neurons, including supernumerary photoreceptor neurons that form at the periphery of the retina and are contained within incomplete ommatidia units. Also required for efficient elimination and replacement of old neurons by newly generated neurons during regeneration in the adult brain following mechanical injury. Downstream of the flower fitness fingerprints, cells identified as unwanted or unfit are eliminated via apoptosis through the expression of ahuizotl (azot). However, the cells marked for elimination by the flower isoforms only undergo apoptosis if additional thresholds are met; (1) their neighboring fit/healthy cells express different levels of the fwe isoforms, and (2) the levels of the protective signal SPARC expressed by the loser or unwanted cells are unable to inhibit caspase activation. These additional thresholds for flower-mediated apoptosis, allows useful cells to recover from transient and limited stress before they are unnecessarily eliminated. Functions with dally and magu in a mechanism of scaling, which utilises apoptosis to ensure that the dpp morphogen gradient, which mediates organ growth, remains proportional to the size of the growing wing. In this mechanism, fwe represses dally- and Magu-dependent activity in expanding the gradient, and dally/Magu inhibits fwe-dependent apoptosis to keep cell death rate low. When the levels of these different proteins are optimally regulated the gradient correctly scales with organ growth but when this fails, fwe-mediated apoptosis is activated to trim the developing tissue to match the correct size of the gradient. This is Calcium channel flower from Drosophila sechellia (Fruit fly).